We begin with the raw amino-acid sequence, 249 residues long: Probable septum site-determining protein MinC (249 aa).

Positions 117–138 (AVRPPQPPPPPHARAEPAAPVA) are disordered.

Belongs to the MinC family. In terms of assembly, interacts with MinD and FtsZ.

Cell division inhibitor that blocks the formation of polar Z ring septums. Rapidly oscillates between the poles of the cell to destabilize FtsZ filaments that have formed before they mature into polar Z rings. Prevents FtsZ polymerization. This is Probable septum site-determining protein MinC from Xanthomonas campestris pv. campestris (strain 8004).